Consider the following 712-residue polypeptide: Elongation factor G (712 aa).

The region spanning 8–290 (TRYRNIGISA…AVIEFLPSPT (283 aa)) is the tr-type G domain. GTP is bound by residues 17–24 (AHIDAGKT), 88–92 (DTPGH), and 142–145 (NKMD).

It belongs to the TRAFAC class translation factor GTPase superfamily. Classic translation factor GTPase family. EF-G/EF-2 subfamily.

The protein localises to the cytoplasm. In terms of biological role, catalyzes the GTP-dependent ribosomal translocation step during translation elongation. During this step, the ribosome changes from the pre-translocational (PRE) to the post-translocational (POST) state as the newly formed A-site-bound peptidyl-tRNA and P-site-bound deacylated tRNA move to the P and E sites, respectively. Catalyzes the coordinated movement of the two tRNA molecules, the mRNA and conformational changes in the ribosome. This is Elongation factor G from Acinetobacter baumannii (strain AB307-0294).